The sequence spans 313 residues: HPr kinase/phosphorylase (313 aa).

Catalysis depends on residues His-141 and Lys-162. 156–163 contacts ATP; that stretch reads GKSGIGKS. Residue Ser-163 coordinates Mg(2+). Asp-180 acts as the Proton acceptor; for phosphorylation activity. Proton donor; for dephosphorylation activity in catalysis. The interval 203-212 is important for the catalytic mechanism of both phosphorylation and dephosphorylation; sequence IEIRGIGIFD. Glu-204 lines the Mg(2+) pocket. The active site involves Arg-247. Residues 268–273 form an important for the catalytic mechanism of dephosphorylation region; that stretch reads PVSAGR.

Belongs to the HPrK/P family. Homohexamer. The cofactor is Mg(2+).

The catalysed reaction is [HPr protein]-L-serine + ATP = [HPr protein]-O-phospho-L-serine + ADP + H(+). The enzyme catalyses [HPr protein]-O-phospho-L-serine + phosphate + H(+) = [HPr protein]-L-serine + diphosphate. Catalyzes the ATP- as well as the pyrophosphate-dependent phosphorylation of a specific serine residue in HPr, a phosphocarrier protein of the phosphoenolpyruvate-dependent sugar phosphotransferase system (PTS). HprK/P also catalyzes the pyrophosphate-producing, inorganic phosphate-dependent dephosphorylation (phosphorolysis) of seryl-phosphorylated HPr (P-Ser-HPr). The two antagonistic activities of HprK/P are regulated by several intracellular metabolites, which change their concentration in response to the absence or presence of rapidly metabolisable carbon sources (glucose, fructose, etc.) in the growth medium. Therefore, by controlling the phosphorylation state of HPr, HPrK/P is a sensor enzyme that plays a major role in the regulation of carbon metabolism and sugar transport: it mediates carbon catabolite repression (CCR), and regulates PTS-catalyzed carbohydrate uptake and inducer exclusion. This is HPr kinase/phosphorylase from Mycoplasma mycoides subsp. mycoides SC (strain CCUG 32753 / NCTC 10114 / PG1).